We begin with the raw amino-acid sequence, 353 residues long: 3-isopropylmalate dehydrogenase (353 aa).

NAD(+) is bound at residue 76 to 89; sequence GPKWDDPRAKVRPE. Substrate contacts are provided by arginine 96, arginine 106, arginine 134, and aspartate 223. 3 residues coordinate Mg(2+): aspartate 223, aspartate 247, and aspartate 251. 281 to 293 lines the NAD(+) pocket; that stretch reads GSAPDIAGKGIAN.

Belongs to the isocitrate and isopropylmalate dehydrogenases family. LeuB type 1 subfamily. Homodimer. It depends on Mg(2+) as a cofactor. Mn(2+) is required as a cofactor.

Its subcellular location is the cytoplasm. It carries out the reaction (2R,3S)-3-isopropylmalate + NAD(+) = 4-methyl-2-oxopentanoate + CO2 + NADH. Its pathway is amino-acid biosynthesis; L-leucine biosynthesis; L-leucine from 3-methyl-2-oxobutanoate: step 3/4. Its function is as follows. Catalyzes the oxidation of 3-carboxy-2-hydroxy-4-methylpentanoate (3-isopropylmalate) to 3-carboxy-4-methyl-2-oxopentanoate. The product decarboxylates to 4-methyl-2 oxopentanoate. This chain is 3-isopropylmalate dehydrogenase, found in Anaeromyxobacter dehalogenans (strain 2CP-C).